Reading from the N-terminus, the 241-residue chain is 6-hydroxymethyl-7,8-dihydropterin pyrophosphokinase (241 aa).

It belongs to the archaeal 6-HMPDK family. The cofactor is Mg(2+).

It carries out the reaction 6-hydroxymethyl-7,8-dihydropterin + ATP = (7,8-dihydropterin-6-yl)methyl diphosphate + AMP + H(+). The protein operates within cofactor biosynthesis; 5,6,7,8-tetrahydromethanopterin biosynthesis. Catalyzes the transfer of diphosphate from ATP to 6-hydroxymethyl-7,8-dihydropterin (6-HMD), leading to 6-hydroxymethyl-7,8-dihydropterin diphosphate (6-HMDP). This is 6-hydroxymethyl-7,8-dihydropterin pyrophosphokinase from Methanocaldococcus jannaschii (strain ATCC 43067 / DSM 2661 / JAL-1 / JCM 10045 / NBRC 100440) (Methanococcus jannaschii).